A 366-amino-acid chain; its full sequence is 3-dehydroquinate synthase (366 aa).

NAD(+) is bound by residues 71 to 76 (DGEKYK), 105 to 109 (GVIGD), 129 to 130 (TT), K142, K151, and 169 to 172 (TLQT). E184, H247, and H264 together coordinate Zn(2+).

The protein belongs to the sugar phosphate cyclases superfamily. Dehydroquinate synthase family. The cofactor is Co(2+). It depends on Zn(2+) as a cofactor. NAD(+) is required as a cofactor.

It localises to the cytoplasm. It catalyses the reaction 7-phospho-2-dehydro-3-deoxy-D-arabino-heptonate = 3-dehydroquinate + phosphate. The protein operates within metabolic intermediate biosynthesis; chorismate biosynthesis; chorismate from D-erythrose 4-phosphate and phosphoenolpyruvate: step 2/7. Its function is as follows. Catalyzes the conversion of 3-deoxy-D-arabino-heptulosonate 7-phosphate (DAHP) to dehydroquinate (DHQ). The protein is 3-dehydroquinate synthase of Actinobacillus pleuropneumoniae serotype 5b (strain L20).